We begin with the raw amino-acid sequence, 77 residues long: Translation initiation factor IF-1, chloroplastic (77 aa).

Positions 1–71 constitute an S1-like domain; that stretch reads MKEQKWIHEG…TRGRIIYRLR (71 aa).

This sequence belongs to the IF-1 family. Component of the 30S ribosomal translation pre-initiation complex which assembles on the 30S ribosome in the order IF-2 and IF-3, IF-1 and N-formylmethionyl-tRNA(fMet); mRNA recruitment can occur at any time during PIC assembly.

It is found in the plastid. The protein resides in the chloroplast. Its function is as follows. One of the essential components for the initiation of protein synthesis. Stabilizes the binding of IF-2 and IF-3 on the 30S subunit to which N-formylmethionyl-tRNA(fMet) subsequently binds. Helps modulate mRNA selection, yielding the 30S pre-initiation complex (PIC). Upon addition of the 50S ribosomal subunit IF-1, IF-2 and IF-3 are released leaving the mature 70S translation initiation complex. In Montinia caryophyllacea (Wild clove bush), this protein is Translation initiation factor IF-1, chloroplastic.